Reading from the N-terminus, the 224-residue chain is Superoxide dismutase [Mn], mitochondrial (224 aa).

The transit peptide at M1–Q20 directs the protein to the mitochondrion. Positions 46, 94, 177, and 181 each coordinate Mn(2+).

The protein belongs to the iron/manganese superoxide dismutase family. As to quaternary structure, homotetramer. It depends on Mn(2+) as a cofactor.

It localises to the mitochondrion matrix. The enzyme catalyses 2 superoxide + 2 H(+) = H2O2 + O2. Functionally, destroys superoxide anion radicals which are normally produced within the cells and which are toxic to biological systems. The chain is Superoxide dismutase [Mn], mitochondrial from Charybdis feriata (Crucifix crab).